We begin with the raw amino-acid sequence, 89 residues long: Small ribosomal subunit protein uS15 (89 aa).

A compositionally biased stretch (basic and acidic residues) spans 1–21 (MVMTAEDKAQVIGEHKKHDGD). The tract at residues 1 to 24 (MVMTAEDKAQVIGEHKKHDGDTGS) is disordered.

It belongs to the universal ribosomal protein uS15 family. As to quaternary structure, part of the 30S ribosomal subunit. Forms a bridge to the 50S subunit in the 70S ribosome, contacting the 23S rRNA.

Functionally, one of the primary rRNA binding proteins, it binds directly to 16S rRNA where it helps nucleate assembly of the platform of the 30S subunit by binding and bridging several RNA helices of the 16S rRNA. Its function is as follows. Forms an intersubunit bridge (bridge B4) with the 23S rRNA of the 50S subunit in the ribosome. The protein is Small ribosomal subunit protein uS15 of Solidesulfovibrio magneticus (strain ATCC 700980 / DSM 13731 / RS-1) (Desulfovibrio magneticus).